The primary structure comprises 183 residues: Ran guanine nucleotide release factor (183 aa).

The interval 23–66 is interaction with RAN; it reads ELRQIPDNQEVFAHSQTDQSIIIELLEYQSQVQDADAARYHFED.

The protein belongs to the MOG1 family. In terms of assembly, monomer. Interacts with ran.

It is found in the nucleus. The protein resides in the cytoplasm. The protein localises to the perinuclear region. Its subcellular location is the cell membrane. May regulate the intracellular trafficking of RAN. Promotes guanine nucleotide release from RAN and inhibits binding of new GTP. Plays a role in the regulation of the levels of GTP-bound RAN in the nucleus. Required for normal expression of the ion channel hcn4 and for normal expression of the cardiac transcription factors nkx2.5, gata4 and hand2 during embryonic development. Required for normal embryonic heart development and normal heart rate. This Danio rerio (Zebrafish) protein is Ran guanine nucleotide release factor.